Here is a 473-residue protein sequence, read N- to C-terminus: Siroheme synthase 2 (473 aa).

The tract at residues 1–204 is precorrin-2 dehydrogenase /sirohydrochlorin ferrochelatase; it reads MDYFPIFCQL…NDHVQADQHV (204 aa). NAD(+) is bound by residues 22–23 and 43–44; these read EI and CE. Ser-128 carries the post-translational modification Phosphoserine. A uroporphyrinogen-III C-methyltransferase region spans residues 216 to 473; that stretch reads GEVVLVGAGP…KVTECVAHVG (258 aa). Pro-225 serves as a coordination point for S-adenosyl-L-methionine. The Proton acceptor role is filled by Asp-248. Lys-270 (proton donor) is an active-site residue. Residues 301 to 303, Ile-306, 331 to 332, Met-382, and Gly-411 each bind S-adenosyl-L-methionine; these read GGD and TA.

It in the N-terminal section; belongs to the precorrin-2 dehydrogenase / sirohydrochlorin ferrochelatase family. In the C-terminal section; belongs to the precorrin methyltransferase family.

It catalyses the reaction uroporphyrinogen III + 2 S-adenosyl-L-methionine = precorrin-2 + 2 S-adenosyl-L-homocysteine + H(+). The enzyme catalyses precorrin-2 + NAD(+) = sirohydrochlorin + NADH + 2 H(+). The catalysed reaction is siroheme + 2 H(+) = sirohydrochlorin + Fe(2+). It participates in cofactor biosynthesis; adenosylcobalamin biosynthesis; precorrin-2 from uroporphyrinogen III: step 1/1. It functions in the pathway cofactor biosynthesis; adenosylcobalamin biosynthesis; sirohydrochlorin from precorrin-2: step 1/1. Its pathway is porphyrin-containing compound metabolism; siroheme biosynthesis; precorrin-2 from uroporphyrinogen III: step 1/1. The protein operates within porphyrin-containing compound metabolism; siroheme biosynthesis; siroheme from sirohydrochlorin: step 1/1. It participates in porphyrin-containing compound metabolism; siroheme biosynthesis; sirohydrochlorin from precorrin-2: step 1/1. Functionally, multifunctional enzyme that catalyzes the SAM-dependent methylations of uroporphyrinogen III at position C-2 and C-7 to form precorrin-2 via precorrin-1. Then it catalyzes the NAD-dependent ring dehydrogenation of precorrin-2 to yield sirohydrochlorin. Finally, it catalyzes the ferrochelation of sirohydrochlorin to yield siroheme. This chain is Siroheme synthase 2, found in Yersinia pseudotuberculosis serotype O:1b (strain IP 31758).